The chain runs to 86 residues: Sec-independent protein translocase protein TatA (86 aa).

The chain crosses the membrane as a helical span at residues 3-23 (IFGVGLPEVTVILILALLIFG). The tract at residues 56-86 (MNEEDESPKSIESNQTNEINQEKIDSENSKK) is disordered. Over residues 65–74 (SIESNQTNEI) the composition is skewed to polar residues. Residues 75–86 (NQEKIDSENSKK) show a composition bias toward basic and acidic residues.

It belongs to the TatA/E family. Forms a complex with TatC.

It localises to the cell inner membrane. Its function is as follows. Part of the twin-arginine translocation (Tat) system that transports large folded proteins containing a characteristic twin-arginine motif in their signal peptide across membranes. TatA could form the protein-conducting channel of the Tat system. The polypeptide is Sec-independent protein translocase protein TatA (Prochlorococcus marinus (strain MIT 9215)).